The chain runs to 136 residues: MWARAVHLGLRAAARGRRGFTSKADPQGSGRVTGELIQHLERLSLVDFGSQEAVARLEKAIAFADRLRAVNTDGVEPMESVLEDRCLYLRSDNVVEGSCAEELLQNSHRVVEEYFVAPPGNISWSKLDEKQPFSHR.

The transit peptide at 1 to 27 (MWARAVHLGLRAAARGRRGFTSKADPQ) directs the protein to the mitochondrion.

This sequence belongs to the GatC family. Subunit of the heterotrimeric GatCAB amidotransferase (AdT) complex, composed of A (QRSL1), B (GATB) and C (GATC) subunits.

It is found in the mitochondrion. The enzyme catalyses L-glutamyl-tRNA(Gln) + L-glutamine + ATP + H2O = L-glutaminyl-tRNA(Gln) + L-glutamate + ADP + phosphate + H(+). Allows the formation of correctly charged Gln-tRNA(Gln) through the transamidation of misacylated Glu-tRNA(Gln) in the mitochondria. The reaction takes place in the presence of glutamine and ATP through an activated gamma-phospho-Glu-tRNA(Gln). This is Glutamyl-tRNA(Gln) amidotransferase subunit C, mitochondrial from Bos taurus (Bovine).